Here is a 218-residue protein sequence, read N- to C-terminus: Glycerol-3-phosphate acyltransferase (218 aa).

The next 5 helical transmembrane spans lie at 5–25 (ALGM…ILIC), 53–73 (LAAA…VWLA), 80–100 (PFYL…PVFF), 115–135 (IAAI…LTVL), and 138–158 (GYSS…VWWF).

The protein belongs to the PlsY family. As to quaternary structure, probably interacts with PlsX.

The protein resides in the cell inner membrane. The catalysed reaction is an acyl phosphate + sn-glycerol 3-phosphate = a 1-acyl-sn-glycero-3-phosphate + phosphate. It functions in the pathway lipid metabolism; phospholipid metabolism. Functionally, catalyzes the transfer of an acyl group from acyl-phosphate (acyl-PO(4)) to glycerol-3-phosphate (G3P) to form lysophosphatidic acid (LPA). This enzyme utilizes acyl-phosphate as fatty acyl donor, but not acyl-CoA or acyl-ACP. This is Glycerol-3-phosphate acyltransferase from Proteus mirabilis (strain HI4320).